The primary structure comprises 439 residues: Dolichyl-diphosphooligosaccharide--protein glycosyltransferase 48 kDa subunit (439 aa).

A signal peptide spans 1 to 26; that stretch reads MEPSTAARAWALFWLLPPLLGAVCAS. The Lumenal portion of the chain corresponds to 27–410; it reads GPRTLVLLDN…YERFIPSAYP (384 aa). A helical membrane pass occupies residues 411-430; sequence YYASAFSMMLGLFIFSIVFL. Residues 431 to 439 are Cytoplasmic-facing; that stretch reads HMKEKEKSD.

The protein belongs to the DDOST 48 kDa subunit family. As to quaternary structure, component of the oligosaccharyltransferase (OST) complex. OST exists in two different complex forms which contain common core subunits RPN1, RPN2, OST48, OST4, DAD1 and TMEM258, either STT3A or STT3B as catalytic subunits, and form-specific accessory subunits. STT3A complex assembly occurs through the formation of 3 subcomplexes. Subcomplex 1 contains RPN1 and TMEM258, subcomplex 2 contains the STT3A-specific subunits STT3A, DC2/OSTC, and KCP2 as well as the core subunit OST4, and subcomplex 3 contains RPN2, DAD1, and OST48. The STT3A complex can form stable complexes with the Sec61 complex or with both the Sec61 and TRAP complexes. Interacts with SMIM22.

It localises to the endoplasmic reticulum membrane. Its pathway is protein modification; protein glycosylation. In terms of biological role, subunit of the oligosaccharyl transferase (OST) complex that catalyzes the initial transfer of a defined glycan (Glc(3)Man(9)GlcNAc(2) in eukaryotes) from the lipid carrier dolichol-pyrophosphate to an asparagine residue within an Asn-X-Ser/Thr consensus motif in nascent polypeptide chains, the first step in protein N-glycosylation. N-glycosylation occurs cotranslationally and the complex associates with the Sec61 complex at the channel-forming translocon complex that mediates protein translocation across the endoplasmic reticulum (ER). All subunits are required for a maximal enzyme activity. Required for the assembly of both SST3A- and SS3B-containing OST complexes. The protein is Dolichyl-diphosphooligosaccharide--protein glycosyltransferase 48 kDa subunit of Pongo abelii (Sumatran orangutan).